Here is a 484-residue protein sequence, read N- to C-terminus: Pre-glycoprotein polyprotein GP complex (484 aa).

Residue G2 is the site of N-myristoyl glycine; by host attachment. Topologically, residues 2–17 (GQLVSFFQEIPNIIQE) are extracellular. A helical membrane pass occupies residues 18–33 (AINIALIAVSLIAILK). The Cytoplasmic segment spans residues 34–58 (GLVNLWKSGLFQLLVFLILAGRSCS). C57 contacts Zn(2+). Residues 59 to 423 (FKIGRSTELQ…QGKTPITLVD (365 aa)) lie on the Extracellular side of the membrane. 4 disulfide bridges follow: C85/C225, C270/C283, C292/C301, and C355/C376. N88, N125, N178, and N218 each carry an N-linked (GlcNAc...) asparagine; by host glycan. N356, N364, N381, and N386 each carry an N-linked (GlcNAc...) asparagine; by host glycan. The chain crosses the membrane as a helical span at residues 424–444 (ICFWSTLFFTTTLFLHLVGFP). Residues 445–484 (THRHIQGEPCPLPHKLNSNGGCRCGRYPELKKPTTWHRKH) are Cytoplasmic-facing. H446, H448, C454, H458, C466, C468, and H484 together coordinate Zn(2+).

It belongs to the arenaviridae GPC protein family. In terms of assembly, interacts with glycoprotein G2. Part of the GP complex (GP-C) together with glycoprotein G1 and glycoprotein G2. The GP-complex interacts with protein Z, which interacts with ribonucleocapsid; these interactions may induce virion budding. As to quaternary structure, homotrimer; disulfide-linked. In pre-fusion state, G1 homotrimers bind G2 homotrimers via ionic interactions. Part of the GP complex (GP-C) together with glycoprotein G2 and the stable signal peptide. The GP-complex interacts with protein Z, which interacts with ribonucleocapsid; these interactions may induce virion budding. Homotrimer. Interacts with the stable signal peptide. In pre-fusion state, G2 homotrimers bind G1 homotrimers via ionic interactions. Part of the GP complex (GP-C) together with glycoprotein G1 and the stable signal peptide. Acidification in the endosome triggers rearrangements, which ultimately leads to a 6 helix bundle formed by the two heptad repeat domains (HR1 and HR2) in post-fusion state. The GP-complex interacts with protein Z, which interacts with ribonucleocapsid; these interactions may induce virion budding. Post-translationally, specific enzymatic cleavages in vivo yield mature proteins. GP-C polyprotein is cleaved in the endoplasmic reticulum by the host protease MBTPS1. Only cleaved glycoprotein is incorporated into virions. In terms of processing, the SSP remains stably associated with the GP complex following cleavage by signal peptidase and plays crucial roles in the trafficking of GP through the secretory pathway. Myristoylation is necessary for GP2-mediated fusion activity.

Its subcellular location is the virion membrane. It is found in the host endoplasmic reticulum membrane. It localises to the host Golgi apparatus membrane. The protein localises to the host cell membrane. Functionally, functions as a cleaved signal peptide that is retained as the third component of the GP complex (GP-C). Helps to stabilize the spike complex in its native conformation. The SSP is required for efficient glycoprotein expression, post-translational maturation cleavage of G1 and G2, glycoprotein transport to the cell surface plasma membrane, formation of infectious virus particles, and acid pH-dependent glycoprotein-mediated cell fusion. Its function is as follows. Glycoprotein G1: Forms the virion spikes together with glycoprotein G2. The glycoprotein spike trimers are connected to the underlying matrix. Interacts with the host receptor leading to virus endocytosis. Forms the virion spikes together with glycoprotein G1. The glycoprotein spike trimers are connected to the underlying matrix. Class I viral fusion protein that directs fusion of viral and host endosomal membranes, leading to delivery of the nucleocapsid into the cytoplasm. Membrane fusion is mediated by irreversible conformational changes induced by acidification. This is Pre-glycoprotein polyprotein GP complex from Chapare mammarenavirus (isolate Human/Bolivia/810419/2003).